We begin with the raw amino-acid sequence, 439 residues long: GTPase Obg (439 aa).

The 160-residue stretch at 3 to 162 (GEFYDSARIF…REIELELKLL (160 aa)) folds into the Obg domain. The region spanning 163–333 (ADVGLIGFPN…LLQRVAERLR (171 aa)) is the OBG-type G domain. Residues 169-176 (GFPNAGKS), 194-198 (FTTLQ), 215-218 (DIPG), 285-288 (NKAD), and 314-316 (SAA) each bind GTP. Positions 176 and 196 each coordinate Mg(2+). One can recognise an OCT domain in the interval 351 to 428 (VPEVDERLYT…IEQAAFDWED (78 aa)).

It belongs to the TRAFAC class OBG-HflX-like GTPase superfamily. OBG GTPase family. In terms of assembly, monomer. The cofactor is Mg(2+).

It localises to the cytoplasm. Its function is as follows. An essential GTPase which binds GTP, GDP and possibly (p)ppGpp with moderate affinity, with high nucleotide exchange rates and a fairly low GTP hydrolysis rate. Plays a role in control of the cell cycle, stress response, ribosome biogenesis and in those bacteria that undergo differentiation, in morphogenesis control. This Roseiflexus castenholzii (strain DSM 13941 / HLO8) protein is GTPase Obg.